The chain runs to 482 residues: tRNA sulfurtransferase (482 aa).

A THUMP domain is found at Leu61–Arg165. ATP is bound by residues Leu183–Ile184, Lys265, Gly287, and Gln296. Cys344 and Cys456 are disulfide-bonded. Positions Phe404 to Pro482 constitute a Rhodanese domain. The active-site Cysteine persulfide intermediate is Cys456.

It belongs to the ThiI family.

The protein localises to the cytoplasm. The catalysed reaction is [ThiI sulfur-carrier protein]-S-sulfanyl-L-cysteine + a uridine in tRNA + 2 reduced [2Fe-2S]-[ferredoxin] + ATP + H(+) = [ThiI sulfur-carrier protein]-L-cysteine + a 4-thiouridine in tRNA + 2 oxidized [2Fe-2S]-[ferredoxin] + AMP + diphosphate. It catalyses the reaction [ThiS sulfur-carrier protein]-C-terminal Gly-Gly-AMP + S-sulfanyl-L-cysteinyl-[cysteine desulfurase] + AH2 = [ThiS sulfur-carrier protein]-C-terminal-Gly-aminoethanethioate + L-cysteinyl-[cysteine desulfurase] + A + AMP + 2 H(+). It participates in cofactor biosynthesis; thiamine diphosphate biosynthesis. Catalyzes the ATP-dependent transfer of a sulfur to tRNA to produce 4-thiouridine in position 8 of tRNAs, which functions as a near-UV photosensor. Also catalyzes the transfer of sulfur to the sulfur carrier protein ThiS, forming ThiS-thiocarboxylate. This is a step in the synthesis of thiazole, in the thiamine biosynthesis pathway. The sulfur is donated as persulfide by IscS. This Salmonella choleraesuis (strain SC-B67) protein is tRNA sulfurtransferase.